We begin with the raw amino-acid sequence, 354 residues long: Peroxisomal membrane protein PEX32 (354 aa).

5 helical membrane passes run 24–44 (LLNMPPVITTALYTAFPVIFL), 63–83 (FIAIAIYIMVVKYWTVVACTV), 84–104 (LPTIIALGTCASLWFLKTTID), 151–171 (GFSLIAITPCYIWLMTRIFTV), and 173–193 (SFLLVFGVAWLSFHSSWSVAT). N-linked (GlcNAc...) asparagine glycosylation occurs at Asn319.

The protein belongs to the PEX28-32 family. PEX30/31 subfamily.

It is found in the peroxisome membrane. Its subcellular location is the endoplasmic reticulum membrane. With PEX24, contributes to tethering of peroxisomes to the endoplasmic reticulum for organelle biogenesis, positioning and segregation. The protein is Peroxisomal membrane protein PEX32 of Ogataea parapolymorpha (strain ATCC 26012 / BCRC 20466 / JCM 22074 / NRRL Y-7560 / DL-1) (Yeast).